The chain runs to 198 residues: dTTP/UTP pyrophosphatase (198 aa).

The active-site Proton acceptor is the Asp-76.

The protein belongs to the Maf family. YhdE subfamily. A divalent metal cation is required as a cofactor.

Its subcellular location is the cytoplasm. It catalyses the reaction dTTP + H2O = dTMP + diphosphate + H(+). The catalysed reaction is UTP + H2O = UMP + diphosphate + H(+). In terms of biological role, nucleoside triphosphate pyrophosphatase that hydrolyzes dTTP and UTP. May have a dual role in cell division arrest and in preventing the incorporation of modified nucleotides into cellular nucleic acids. This Shewanella denitrificans (strain OS217 / ATCC BAA-1090 / DSM 15013) protein is dTTP/UTP pyrophosphatase.